We begin with the raw amino-acid sequence, 284 residues long: 2-dehydro-3-deoxyphosphooctonate aldolase (284 aa).

This sequence belongs to the KdsA family.

The protein resides in the cytoplasm. It carries out the reaction D-arabinose 5-phosphate + phosphoenolpyruvate + H2O = 3-deoxy-alpha-D-manno-2-octulosonate-8-phosphate + phosphate. It functions in the pathway carbohydrate biosynthesis; 3-deoxy-D-manno-octulosonate biosynthesis; 3-deoxy-D-manno-octulosonate from D-ribulose 5-phosphate: step 2/3. The protein operates within bacterial outer membrane biogenesis; lipopolysaccharide biosynthesis. This is 2-dehydro-3-deoxyphosphooctonate aldolase from Burkholderia cenocepacia (strain HI2424).